Consider the following 556-residue polypeptide: Arginine--tRNA ligase (556 aa).

The 'HIGH' region signature appears at 132–142 (ANPTGDLHLGH).

Belongs to the class-I aminoacyl-tRNA synthetase family. As to quaternary structure, monomer.

It localises to the cytoplasm. The catalysed reaction is tRNA(Arg) + L-arginine + ATP = L-arginyl-tRNA(Arg) + AMP + diphosphate. This Listeria monocytogenes serotype 4b (strain F2365) protein is Arginine--tRNA ligase.